The chain runs to 436 residues: MSMFLDTAKIQVKAGNGGDGMVAFRREKYVPNGGPWGGDGGRGGNVVFVVDEGLRTLMDFRYNRHFKAQSGEKGMTKGMHGRGAEDLIVRVPQGTTVRDAETGKVLTDLVENGQEFIVARGGRGGRGNIRFATPKNPAPEISENGEPGQERELLLELKVLADVGLVGFPSVGKSTLLSVITAAKPKIGAYHFTTIVPNLGMVRTQSGESFAVADLPGLIEGASQGVGLGTQFLRHIERTRVILHVIDMSASEGRDPYEDYLAINKELESYNLRLMERPQIIVANKMDMPDSAENLKVFKEKLAANYDEFAELPQIFPISSLTKQGLATLLDATAELLDKTPEFLLYDESEMEEEAYYGFDEEAPAFEISRDDDATWVLSGDKLEKLFNMTNFDRDEAVMKFARQLRGMGVDEALRARGAKDGDLVRIGKFEFEFVD.

Positions 2–160 (SMFLDTAKIQ…RELLLELKVL (159 aa)) constitute an Obg domain. The OBG-type G domain occupies 161-338 (ADVGLVGFPS…LLDATAELLD (178 aa)). Residues 167–174 (GFPSVGKS), 192–196 (FTTIV), 214–217 (DLPG), 284–287 (NKMD), and 319–321 (SSL) contribute to the GTP site. Mg(2+) contacts are provided by Ser-174 and Thr-194. The 79-residue stretch at 358 to 436 (GFDEEAPAFE…IGKFEFEFVD (79 aa)) folds into the OCT domain.

Belongs to the TRAFAC class OBG-HflX-like GTPase superfamily. OBG GTPase family. As to quaternary structure, monomer. Mg(2+) serves as cofactor.

It is found in the cytoplasm. In terms of biological role, an essential GTPase which binds GTP, GDP and possibly (p)ppGpp with moderate affinity, with high nucleotide exchange rates and a fairly low GTP hydrolysis rate. Plays a role in control of the cell cycle, stress response, ribosome biogenesis and in those bacteria that undergo differentiation, in morphogenesis control. This chain is GTPase Obg, found in Streptococcus gordonii (strain Challis / ATCC 35105 / BCRC 15272 / CH1 / DL1 / V288).